The chain runs to 237 residues: Phosphoribosylaminoimidazole-succinocarboxamide synthase (237 aa).

This sequence belongs to the SAICAR synthetase family.

The enzyme catalyses 5-amino-1-(5-phospho-D-ribosyl)imidazole-4-carboxylate + L-aspartate + ATP = (2S)-2-[5-amino-1-(5-phospho-beta-D-ribosyl)imidazole-4-carboxamido]succinate + ADP + phosphate + 2 H(+). It functions in the pathway purine metabolism; IMP biosynthesis via de novo pathway; 5-amino-1-(5-phospho-D-ribosyl)imidazole-4-carboxamide from 5-amino-1-(5-phospho-D-ribosyl)imidazole-4-carboxylate: step 1/2. This Halalkalibacterium halodurans (strain ATCC BAA-125 / DSM 18197 / FERM 7344 / JCM 9153 / C-125) (Bacillus halodurans) protein is Phosphoribosylaminoimidazole-succinocarboxamide synthase.